The following is a 495-amino-acid chain: ATP synthase subunit beta, chloroplastic (495 aa).

ATP is bound at residue 172-179 (GGAGVGKT).

The protein belongs to the ATPase alpha/beta chains family. In terms of assembly, F-type ATPases have 2 components, CF(1) - the catalytic core - and CF(0) - the membrane proton channel. CF(1) has five subunits: alpha(3), beta(3), gamma(1), delta(1), epsilon(1). CF(0) has four main subunits: a(1), b(1), b'(1) and c(9-12).

It is found in the plastid. The protein resides in the chloroplast thylakoid membrane. It catalyses the reaction ATP + H2O + 4 H(+)(in) = ADP + phosphate + 5 H(+)(out). Functionally, produces ATP from ADP in the presence of a proton gradient across the membrane. The catalytic sites are hosted primarily by the beta subunits. This is ATP synthase subunit beta, chloroplastic from Scilla siberica (Siberian squill).